Consider the following 400-residue polypeptide: Serine/threonine transporter SstT (400 aa).

A run of 10 helical transmembrane segments spans residues 11-31 (IGLVPLIIIGLVLGVLIGWLA), 45-65 (FVGALKAVAPILVFVLVMAAI), 81-101 (IMYMFGTFLAALTAVGASFLF), 138-158 (AIAEANYIGILAWAIIIGFAL), 175-195 (AISQVVKWVIALAPFGILGLV), 213-233 (ILMVLVGCMLFIALVVNPLII), 242-264 (YPLVFICLRESGITAFFTRSSAA), 295-315 (MAGAAITINVLTLAAAHTLGI), 327-347 (LVATISACGASGVAGGSLLLI), and 354-374 (FSIPNDIAMQVVAIGFIIGVI).

Belongs to the dicarboxylate/amino acid:cation symporter (DAACS) (TC 2.A.23) family.

It is found in the cell inner membrane. The catalysed reaction is L-serine(in) + Na(+)(in) = L-serine(out) + Na(+)(out). It carries out the reaction L-threonine(in) + Na(+)(in) = L-threonine(out) + Na(+)(out). Involved in the import of serine and threonine into the cell, with the concomitant import of sodium (symport system). This is Serine/threonine transporter SstT from Psychrobacter cryohalolentis (strain ATCC BAA-1226 / DSM 17306 / VKM B-2378 / K5).